Reading from the N-terminus, the 303-residue chain is Tyrosine-protein phosphatase 3 (303 aa).

One can recognise a Tyrosine-protein phosphatase domain in the interval 24 to 292; it reads YMIIEGLNEE…VFLYTVSQEL (269 aa). Residue C227 is the Phosphocysteine intermediate of the active site.

The protein belongs to the protein-tyrosine phosphatase family. Non-receptor class subfamily.

The protein resides in the cytoplasm. The enzyme catalyses O-phospho-L-tyrosyl-[protein] + H2O = L-tyrosyl-[protein] + phosphate. Functionally, contributes to dephosphorylation of tyrosine 15 of cdc2. This chain is Tyrosine-protein phosphatase 3 (pyp3), found in Schizosaccharomyces pombe (strain 972 / ATCC 24843) (Fission yeast).